The sequence spans 93 residues: Small ribosomal subunit protein uS19 (93 aa).

The protein belongs to the universal ribosomal protein uS19 family.

In terms of biological role, protein S19 forms a complex with S13 that binds strongly to the 16S ribosomal RNA. This Brevibacillus brevis (strain 47 / JCM 6285 / NBRC 100599) protein is Small ribosomal subunit protein uS19.